Consider the following 37-residue polypeptide: Large ribosomal subunit protein bL36c (37 aa).

Belongs to the bacterial ribosomal protein bL36 family.

It is found in the plastid. The protein localises to the chloroplast. This Populus alba (White poplar) protein is Large ribosomal subunit protein bL36c.